The following is a 444-amino-acid chain: Protein EVI2B (444 aa).

An N-terminal signal peptide occupies residues 1-23 (MEFKYLVFIVLCQYLDNTFFSET). The Extracellular segment spans residues 24-203 (EAITTEQQSL…GTAHKNNHNA (180 aa)). Residues Asn-63, Asn-94, Asn-104, and Asn-127 are each glycosylated (N-linked (GlcNAc...) asparagine). 2 stretches are compositionally biased toward polar residues: residues 104 to 131 (NNSLPQTSPSGFTLTNQPSPSTYNSTGQ) and 160 to 171 (THNQPTKSTPTI). The segment at 104 to 197 (NNSLPQTSPS…EPPSGKGTAH (94 aa)) is disordered. Positions 177 to 187 (TPPPPPPPLTS) are enriched in pro residues. Residues 204 to 224 (IAAILIGTIIISMLVAILMII) traverse the membrane as a helical segment. Over 225–444 (LWKYLRKPVL…SLPPPPTELL (220 aa)) the chain is Cytoplasmic. Residue Thr-250 is modified to Phosphothreonine. Ser-269, Ser-272, Ser-279, and Ser-295 each carry phosphoserine. 2 stretches are compositionally biased toward polar residues: residues 318–332 (SEDSADGSTVGTAVS) and 361–370 (SPLPNDSINP). 2 disordered regions span residues 318-337 (SEDSADGSTVGTAVSSDDAD) and 361-444 (SPLP…TELL).

In terms of tissue distribution, expressed in myeloid and lymphoid progenitors and increased in mature hematopoietic populations with the highest levels in granulocytes.

The protein resides in the membrane. Its function is as follows. Required for granulocyte differentiation and functionality of hematopoietic progenitor cells through the control of cell cycle progression and survival of hematopoietic progenitor cells. The protein is Protein EVI2B of Mus musculus (Mouse).